The chain runs to 92 residues: Large ribosomal subunit protein bL28 (92 aa).

This sequence belongs to the bacterial ribosomal protein bL28 family.

In Borreliella burgdorferi (strain ATCC 35210 / DSM 4680 / CIP 102532 / B31) (Borrelia burgdorferi), this protein is Large ribosomal subunit protein bL28.